We begin with the raw amino-acid sequence, 68 residues long: Large ribosomal subunit protein bL32 (68 aa).

The tract at residues 1-25 (MAVPQNKITKSRRGQRRSHDALVAG) is disordered.

This sequence belongs to the bacterial ribosomal protein bL32 family.

The protein is Large ribosomal subunit protein bL32 of Dinoroseobacter shibae (strain DSM 16493 / NCIMB 14021 / DFL 12).